The sequence spans 211 residues: uncharacterized protein (211 aa).

Transmembrane regions (helical) follow at residues 21 to 38, 53 to 75, 82 to 104, 124 to 146, 159 to 178, and 188 to 210; these read WYVI…ASEI, WGMD…YAAV, TAYL…MGVA, IFYA…AANV, PLLI…YWVY, and AVSF…LMEW.

It localises to the cell membrane. This is an uncharacterized protein from Archaeoglobus fulgidus (strain ATCC 49558 / DSM 4304 / JCM 9628 / NBRC 100126 / VC-16).